The sequence spans 260 residues: MVLIRVLANLLVLQLSYAQKSSELVIGGDECNINEHPFLVALHTARSKRFYCAGTLINQEWVLTAARCDRKNIRIILGVHSKNVPNEDEQMRVPKEKFFCLSSKTYTRWDKDIMLIRLKRPVNDSTHIAPLSLPSSPPSVGSVCRIMGWGTITTTKVTYPDVPHCADINMFDYSVCQKVYRKLPEKSRTLCAGILQGGIDSCKVDNGGPLICNGQIQGIVSWGGYPCAQPHKPALYTNVFDYTDWIQSIIAGNITATCPP.

The N-terminal stretch at 1 to 18 (MVLIRVLANLLVLQLSYA) is a signal peptide. Positions 19–24 (QKSSEL) are excised as a propeptide. In terms of domain architecture, Peptidase S1 spans 25 to 251 (VIGGDECNIN…YTDWIQSIIA (227 aa)). 6 disulfide bridges follow: Cys-31–Cys-165, Cys-52–Cys-68, Cys-100–Cys-258, Cys-144–Cys-212, Cys-176–Cys-191, and Cys-202–Cys-227. Asn-123 carries an N-linked (GlcNAc...) asparagine glycan. Residues 172 to 186 (DYSVCQKVYRKLPEK) form a key residues for binding to FVIIIa region. N-linked (GlcNAc...) asparagine glycosylation occurs at Asn-253.

This sequence belongs to the peptidase S1 family. Snake venom subfamily. N-glycosylated. The toxin exists in multiple glycoforms. Expressed by the venom gland.

The protein localises to the secreted. This is the first member of the serine protease family that has strong anticoagulant activity and lacks enzymatic activity. It inhibits activities of three blood coagulation complexes: (1) prothrombinase complex (composed of blood coagulation factors Va and Xa (F5 and F10)) (IC(50)=164.1 nM), (2) intrinsic tenase complex (composed of factors VIIIa and IXa (F8 and F9)), and (3) extrinsic tenase complex (composed of tissue factor and factor VIIa (F7)). The toxin also has been observed to bind prothrombin, factor FVa, non-activated and activated forms of factors FVII (F7) (FVII and FVIIa), factor FVIIIa (F8), factors FIX and FIXa (F9) and factors FX and FXa (F10). The toxin inhibits the activity of the intrinsic tenase complex mainly by competing with FIXa (F9) for binding to FVIIIa (F8). The sequence is that of Vaa serine proteinase homolog 1 from Vipera ammodytes ammodytes (Western sand viper).